The following is a 460-amino-acid chain: Cysteine--tRNA ligase (460 aa).

Cys28 lines the Zn(2+) pocket. A 'HIGH' region motif is present at residues 30 to 40 (MTVYDYCHLGH). 3 residues coordinate Zn(2+): Cys209, His234, and Glu238. The 'KMSKS' region signature appears at 266 to 270 (KMSKS). Position 269 (Lys269) interacts with ATP.

The protein belongs to the class-I aminoacyl-tRNA synthetase family. Monomer. Zn(2+) serves as cofactor.

The protein resides in the cytoplasm. The enzyme catalyses tRNA(Cys) + L-cysteine + ATP = L-cysteinyl-tRNA(Cys) + AMP + diphosphate. The protein is Cysteine--tRNA ligase of Pseudomonas syringae pv. tomato (strain ATCC BAA-871 / DC3000).